The primary structure comprises 208 residues: Large ribosomal subunit protein uL3 (208 aa).

Residues 123–147 (RHGQSRGPMAHGSRYHRRPGSMGPV) form a disordered region.

This sequence belongs to the universal ribosomal protein uL3 family. Part of the 50S ribosomal subunit. Forms a cluster with proteins L14 and L19.

One of the primary rRNA binding proteins, it binds directly near the 3'-end of the 23S rRNA, where it nucleates assembly of the 50S subunit. This is Large ribosomal subunit protein uL3 from Streptococcus uberis (strain ATCC BAA-854 / 0140J).